Consider the following 312-residue polypeptide: HTH-type transcriptional regulator PtxR (312 aa).

The region spanning 11 to 68 (LNLNHLYAFVAVAEHNSFTAAAEALGLSKSLLSEQLRRLEADLGIQLLTRTTRRMTLT) is the HTH lysR-type domain. A DNA-binding region (H-T-H motif) is located at residues 28-47 (FTAAAEALGLSKSLLSEQLR).

The protein belongs to the LysR transcriptional regulatory family. Monomer in solution. May dimerize on binding to DNA. Interacts with PtxS in the absence of 2-ketogluconate. Binding of the 2-ketogluconate effector to PtxS causes PtxS/PtxR complex dissociation.

Its activity is regulated as follows. Negatively regulated by PtxS, which interacts with PtxR and prevents its activity. In terms of biological role, plays an important role in the regulation of the production of the virulence factor exotoxin A (toxA), via positive regulation of the transcription of the toxA gene. Acts by binding directly to the toxA promoter region. Besides toxA, PtxR modulates the expression of genes that code for the QS-controlled virulence factors. It negatively regulates the expression of the rhamnolipid and pyocyanine genes, through the autoinducer synthase RhlI, and the PQS synthesis operon pqsABCDE, while it positively regulates the expression of lasB through the autoinducer synthase LasI. Also positively regulates the expression of the exotoxin A regulatory protein (toxR or regA). Its function is as follows. In addition, is involved in the positive regulation of glucose metabolism via the regulation of the expression of the kgu and gad operons. Acts by binding directly to the promoter region of the kgu and gad operons. The protein is HTH-type transcriptional regulator PtxR of Pseudomonas aeruginosa (strain ATCC 15692 / DSM 22644 / CIP 104116 / JCM 14847 / LMG 12228 / 1C / PRS 101 / PAO1).